The chain runs to 461 residues: Pyruvate kinase (461 aa).

Arg-46 is a substrate binding site. Asn-48 and Asp-80 together coordinate K(+). Asn-48–His-51 lines the ATP pocket. The ATP site is built by Arg-87 and Lys-165. Glu-232 is a Mg(2+) binding site. Substrate-binding residues include Gly-255, Asp-256, and Thr-288. Asp-256 serves as a coordination point for Mg(2+).

It belongs to the pyruvate kinase family. In terms of assembly, homotetramer. Requires a divalent metal cation as cofactor.

The catalysed reaction is pyruvate + ATP = phosphoenolpyruvate + ADP + H(+). It functions in the pathway carbohydrate degradation; glycolysis; pyruvate from D-glyceraldehyde 3-phosphate: step 5/5. With respect to regulation, not activated by classical allosteric effectors. The chain is Pyruvate kinase (pyk) from Pyrobaculum aerophilum (strain ATCC 51768 / DSM 7523 / JCM 9630 / CIP 104966 / NBRC 100827 / IM2).